We begin with the raw amino-acid sequence, 115 residues long: Beta-2-microglobulin (115 aa).

The first 16 residues, 1 to 16 (MKIALVLLSLLALTLA), serve as a signal peptide directing secretion. In terms of domain architecture, Ig-like C1-type spans 22–113 (PPVVKVYTAE…GNPSKKYRLD (92 aa)).

It belongs to the beta-2-microglobulin family. In terms of assembly, heterodimer of an alpha chain and a beta chain. Beta-2-microglobulin is the beta-chain of major histocompatibility complex class I molecules.

It is found in the secreted. Functionally, component of the class I major histocompatibility complex (MHC). Involved in the presentation of peptide antigens to the immune system. The chain is Beta-2-microglobulin (b2m) from Xenopus laevis (African clawed frog).